We begin with the raw amino-acid sequence, 74 residues long: Protein SlyX homolog (74 aa).

The tract at residues 52–74 (LKQMQENQSTDSDPADEPPPPHY) is disordered.

Belongs to the SlyX family.

The chain is Protein SlyX homolog from Idiomarina loihiensis (strain ATCC BAA-735 / DSM 15497 / L2-TR).